Consider the following 130-residue polypeptide: Small ribosomal subunit protein uS9 (130 aa).

Belongs to the universal ribosomal protein uS9 family.

The polypeptide is Small ribosomal subunit protein uS9 (Shewanella piezotolerans (strain WP3 / JCM 13877)).